The chain runs to 403 residues: Tyrosine--tRNA ligase (403 aa).

A 'HIGH' region motif is present at residues 45–54 (PTAPDLHLGH). The 'KMSKS' region motif lies at 229–233 (KMSKS). Residue lysine 232 coordinates ATP. The region spanning 341–402 (VLLGRLLAEA…GKRRFARIVF (62 aa)) is the S4 RNA-binding domain.

It belongs to the class-I aminoacyl-tRNA synthetase family. TyrS type 2 subfamily. In terms of assembly, homodimer.

It is found in the cytoplasm. It catalyses the reaction tRNA(Tyr) + L-tyrosine + ATP = L-tyrosyl-tRNA(Tyr) + AMP + diphosphate + H(+). Its function is as follows. Catalyzes the attachment of tyrosine to tRNA(Tyr) in a two-step reaction: tyrosine is first activated by ATP to form Tyr-AMP and then transferred to the acceptor end of tRNA(Tyr). This Geobacter metallireducens (strain ATCC 53774 / DSM 7210 / GS-15) protein is Tyrosine--tRNA ligase.